A 346-amino-acid polypeptide reads, in one-letter code: MHLMEFPREVILGKNLIQEINNVIKRLKLGSPGLVVYGPITKKIAGSNVEKIVKEEFEVYSITVKEAHINEVERVISKIRDKGIKWAIAVGGGSIIDVTKLASFKMGIPFISFPTTASHDGIASANASIKGLNVKTSIKAKPPIAVIADIDVIKTAPKRYLAAGVGDIVSNITAVRDWKLAHKLKGEYFSEYAASLSLMSAKMVIRDAEIIRLGQDEGIRKVVKALISSGVAMSIAGSSRPASGAEHLFSHALDMLLDKPALHGEQTGIGTIIMAYLHGINWKKIRDTLKIVGAPTTAYELGIDPEIIIEALTIAHTIRPERYTILGKEGITREAAEKAAKITGVI.

Residues 93–97 (GSIID) and 115–118 (TTAS) each bind NAD(+). A substrate-binding site is contributed by Asp-120. Residue Ser-124 coordinates NAD(+). Asp-167 provides a ligand contact to substrate. Zn(2+) contacts are provided by Asp-167 and His-247. His-251 provides a ligand contact to substrate. His-263 contributes to the Zn(2+) binding site.

The protein belongs to the glycerol-1-phosphate dehydrogenase family. Zn(2+) is required as a cofactor.

Its subcellular location is the cytoplasm. It catalyses the reaction sn-glycerol 1-phosphate + NAD(+) = dihydroxyacetone phosphate + NADH + H(+). The catalysed reaction is sn-glycerol 1-phosphate + NADP(+) = dihydroxyacetone phosphate + NADPH + H(+). Its pathway is membrane lipid metabolism; glycerophospholipid metabolism. Catalyzes the NAD(P)H-dependent reduction of dihydroxyacetonephosphate (DHAP or glycerone phosphate) to glycerol 1-phosphate (G1P). The G1P thus generated is used as the glycerophosphate backbone of phospholipids in the cellular membranes of Archaea. The sequence is that of Glycerol-1-phosphate dehydrogenase [NAD(P)+] from Pyrococcus horikoshii (strain ATCC 700860 / DSM 12428 / JCM 9974 / NBRC 100139 / OT-3).